The primary structure comprises 148 residues: uncharacterized protein (148 aa).

CBS domains are found at residues 8–68 and 74–130; these read MTAD…PNSQ and MTEK…ERAG. Positions 127–148 are disordered; sequence ERAGSALSDISEGDNREEGFFH. The segment covering 139 to 148 has biased composition (basic and acidic residues); the sequence is GDNREEGFFH.

This is an uncharacterized protein from Bacillus subtilis (strain 168).